Here is a 227-residue protein sequence, read N- to C-terminus: Cytochrome c oxidase subunit 2 (227 aa).

Residues 1–14 (MAYPMQLGFQDATS) lie on the Mitochondrial intermembrane side of the membrane. The helical transmembrane segment at 15–45 (PIMEELLHFHDHTLMIVFLISSLVLYVISLM) threads the bilayer. The Mitochondrial matrix portion of the chain corresponds to 46–59 (LTTKLTHTSTMDAQ). The chain crosses the membrane as a helical span at residues 60–87 (EVETIWTILPAIILILIALPSLRILYMM). At 88-227 (DEINNPSLTV…YFEKWSASML (140 aa)) the chain is on the mitochondrial intermembrane side. Residues H161, C196, E198, C200, H204, and M207 each contribute to the Cu cation site. E198 lines the Mg(2+) pocket.

The protein belongs to the cytochrome c oxidase subunit 2 family. Component of the cytochrome c oxidase (complex IV, CIV), a multisubunit enzyme composed of 14 subunits. The complex is composed of a catalytic core of 3 subunits MT-CO1, MT-CO2 and MT-CO3, encoded in the mitochondrial DNA, and 11 supernumerary subunits COX4I, COX5A, COX5B, COX6A, COX6B, COX6C, COX7A, COX7B, COX7C, COX8 and NDUFA4, which are encoded in the nuclear genome. The complex exists as a monomer or a dimer and forms supercomplexes (SCs) in the inner mitochondrial membrane with NADH-ubiquinone oxidoreductase (complex I, CI) and ubiquinol-cytochrome c oxidoreductase (cytochrome b-c1 complex, complex III, CIII), resulting in different assemblies (supercomplex SCI(1)III(2)IV(1) and megacomplex MCI(2)III(2)IV(2)). Found in a complex with TMEM177, COA6, COX18, COX20, SCO1 and SCO2. Interacts with TMEM177 in a COX20-dependent manner. Interacts with COX20. Interacts with COX16. It depends on Cu cation as a cofactor.

It is found in the mitochondrion inner membrane. The enzyme catalyses 4 Fe(II)-[cytochrome c] + O2 + 8 H(+)(in) = 4 Fe(III)-[cytochrome c] + 2 H2O + 4 H(+)(out). Its function is as follows. Component of the cytochrome c oxidase, the last enzyme in the mitochondrial electron transport chain which drives oxidative phosphorylation. The respiratory chain contains 3 multisubunit complexes succinate dehydrogenase (complex II, CII), ubiquinol-cytochrome c oxidoreductase (cytochrome b-c1 complex, complex III, CIII) and cytochrome c oxidase (complex IV, CIV), that cooperate to transfer electrons derived from NADH and succinate to molecular oxygen, creating an electrochemical gradient over the inner membrane that drives transmembrane transport and the ATP synthase. Cytochrome c oxidase is the component of the respiratory chain that catalyzes the reduction of oxygen to water. Electrons originating from reduced cytochrome c in the intermembrane space (IMS) are transferred via the dinuclear copper A center (CU(A)) of subunit 2 and heme A of subunit 1 to the active site in subunit 1, a binuclear center (BNC) formed by heme A3 and copper B (CU(B)). The BNC reduces molecular oxygen to 2 water molecules using 4 electrons from cytochrome c in the IMS and 4 protons from the mitochondrial matrix. The polypeptide is Cytochrome c oxidase subunit 2 (MT-CO2) (Gazella spekei (Speke's gazelle)).